The following is a 201-amino-acid chain: FMN-dependent NADH:quinone oxidoreductase (201 aa).

FMN is bound by residues Ser10, 16 to 18 (SQS), and 96 to 99 (MYNF).

It belongs to the azoreductase type 1 family. In terms of assembly, homodimer. Requires FMN as cofactor.

It carries out the reaction 2 a quinone + NADH + H(+) = 2 a 1,4-benzosemiquinone + NAD(+). The catalysed reaction is N,N-dimethyl-1,4-phenylenediamine + anthranilate + 2 NAD(+) = 2-(4-dimethylaminophenyl)diazenylbenzoate + 2 NADH + 2 H(+). Functionally, quinone reductase that provides resistance to thiol-specific stress caused by electrophilic quinones. In terms of biological role, also exhibits azoreductase activity. Catalyzes the reductive cleavage of the azo bond in aromatic azo compounds to the corresponding amines. The chain is FMN-dependent NADH:quinone oxidoreductase from Sodalis glossinidius (strain morsitans).